The following is a 133-amino-acid chain: ATP synthase epsilon chain (133 aa).

It belongs to the ATPase epsilon chain family. In terms of assembly, F-type ATPases have 2 components, CF(1) - the catalytic core - and CF(0) - the membrane proton channel. CF(1) has five subunits: alpha(3), beta(3), gamma(1), delta(1), epsilon(1). CF(0) has three main subunits: a, b and c.

Its subcellular location is the cell membrane. Produces ATP from ADP in the presence of a proton gradient across the membrane. The polypeptide is ATP synthase epsilon chain (Halalkalibacterium halodurans (strain ATCC BAA-125 / DSM 18197 / FERM 7344 / JCM 9153 / C-125) (Bacillus halodurans)).